We begin with the raw amino-acid sequence, 219 residues long: 2-C-methyl-D-erythritol 4-phosphate cytidylyltransferase (219 aa).

Belongs to the IspD/TarI cytidylyltransferase family. IspD subfamily.

The catalysed reaction is 2-C-methyl-D-erythritol 4-phosphate + CTP + H(+) = 4-CDP-2-C-methyl-D-erythritol + diphosphate. Its pathway is isoprenoid biosynthesis; isopentenyl diphosphate biosynthesis via DXP pathway; isopentenyl diphosphate from 1-deoxy-D-xylulose 5-phosphate: step 2/6. Catalyzes the formation of 4-diphosphocytidyl-2-C-methyl-D-erythritol from CTP and 2-C-methyl-D-erythritol 4-phosphate (MEP). The sequence is that of 2-C-methyl-D-erythritol 4-phosphate cytidylyltransferase from Bacteroides thetaiotaomicron (strain ATCC 29148 / DSM 2079 / JCM 5827 / CCUG 10774 / NCTC 10582 / VPI-5482 / E50).